The following is a 333-amino-acid chain: Probable G-protein coupled receptor 33 (333 aa).

The Extracellular segment spans residues 1 to 30 (MDLINSTDYLINASTLVRNSTQFLAPASKM). N-linked (GlcNAc...) asparagine glycans are attached at residues asparagine 5, asparagine 12, and asparagine 19. The helical transmembrane segment at 31-53 (IIALSLYISSIIGTITNGLYLWV) threads the bilayer. At 54-64 (LRFKMKQTVNT) the chain is on the cytoplasmic side. A helical transmembrane segment spans residues 65–86 (LLFFHLILSYFISTMILPFMAT). Topologically, residues 87–103 (SQLQDNHWNFGTALCKV) are extracellular. A disulfide bridge connects residues cysteine 101 and cysteine 179. Residues 104–124 (FNGTLSLGMFTSVFFLSAIGL) form a helical membrane-spanning segment. Over 125–143 (DRYLLTLHPVWSQQHRTPR) the chain is Cytoplasmic. The chain crosses the membrane as a helical span at residues 144–165 (WASSIVLGVWISAAALSIPYLI). Topologically, residues 166 to 209 (FRETHHDRKGKVTCQNNYAVSTNWESKEMQASRQWIHVACFISR) are extracellular. A helical membrane pass occupies residues 210–230 (FLLGFLLPFFIIIFCYERVAS). Topologically, residues 231-246 (KVKERSLFKSSKPFKV) are cytoplasmic. Residues 247 to 268 (MMTAIISFFVCWMPYHIHQGLL) form a helical membrane-spanning segment. Topologically, residues 269–283 (LTTNQSLLLELTLIL) are extracellular. N-linked (GlcNAc...) asparagine glycosylation occurs at asparagine 272. The chain crosses the membrane as a helical span at residues 284–303 (TVLTTSFNTIFSPTLYLFVG). The Cytoplasmic segment spans residues 304–333 (ENFKKVFKKSILALFESTFSEDSSVERTQT).

This sequence belongs to the G-protein coupled receptor 1 family. In terms of tissue distribution, expressed in spleen, lung, heart, liver, kidney, pancreas, thymus, gonads and leukocytes.

The protein localises to the cell membrane. Its function is as follows. Orphan receptor; could be a chemoattractant receptor. The polypeptide is Probable G-protein coupled receptor 33 (GPR33) (Homo sapiens (Human)).